A 548-amino-acid chain; its full sequence is Natural resistance-associated macrophage protein 1 (548 aa).

Positions 1–38 (MPGDMGPPKQGGTRYGSISSPPSPGPQQAPPGGTYLSE) are disordered. Residues 1-55 (MPGDMGPPKQGGTRYGSISSPPSPGPQQAPPGGTYLSEKIPIPDTESGAFSLRKL) are Cytoplasmic-facing. Residues 56–73 (WAFTGPGFLMSIAFLDPG) traverse the membrane as a helical segment. The Extracellular segment spans residues 74-82 (NIESDLQAG). A helical membrane pass occupies residues 83–102 (AVAGFKLLWVLLWATVLGLL). The Cytoplasmic segment spans residues 103–139 (CQRLAARLGVVTGKDLGEVCHLYYPKVPRILLWLTIE). The chain crosses the membrane as a helical span at residues 140-160 (LAIVGSDMQEVIGTAIAFSLL). Topologically, residues 161 to 164 (SAGR) are extracellular. The helical transmembrane segment at 165 to 184 (IPLWGGVLITIVDTFFFLFL) threads the bilayer. Topologically, residues 185 to 193 (DNYGLRKLE) are cytoplasmic. The helical transmembrane segment at 194–214 (AFFGFLITIMALTFGYEYVVA) threads the bilayer. Over 215–237 (RPAQGALLQGLFLPSCAGCGQPE) the chain is Extracellular. Residues 238 to 256 (LLQAVGIVGAIIMPHNIYL) traverse the membrane as a helical segment. The Cytoplasmic segment spans residues 257–284 (HSSLVKSREVDRSRRADIREANMYFLIE). A helical membrane pass occupies residues 285-304 (ATIALSVSFLINLFVMAVFG). The Extracellular segment spans residues 305 to 346 (QAFYKQTNQAAFNICANSSLHDYATIFPRNNLTVAVDIYQGG). Residues N321 and N335 are each glycosylated (N-linked (GlcNAc...) asparagine). A helical membrane pass occupies residues 347-366 (VILGCLFGPAALYIWAVGLL). Topologically, residues 367–397 (AAGQSSTMTGTYAGQFVMEGFLKLRWSRFAR) are cytoplasmic. Residues 398–415 (VLLTRSCAILPTVLVAVF) form a helical membrane-spanning segment. Residues 416–426 (RDLRDLSGLND) are Extracellular-facing. The helical transmembrane segment at 427–447 (LLNVLQSLLLPFAVLPILTFT) threads the bilayer. Over 448 to 463 (SMPAVMQEFANGLVSK) the chain is Cytoplasmic. A helical transmembrane segment spans residues 464-485 (VISSSIMVLVCAVNLYFVISYV). Residues 486 to 493 (PSLPHPDY) lie on the Extracellular side of the membrane. The helical transmembrane segment at 494-513 (FSLVALLAAAYLGLTTYLVW) threads the bilayer. The Cytoplasmic segment spans residues 514–548 (TCLITQGATLLAHSSHQRFLYGLPEEDQENGRTSG).

It belongs to the NRAMP family.

It is found in the late endosome membrane. The protein localises to the lysosome membrane. It carries out the reaction Zn(2+)(in) + H(+)(out) = Zn(2+)(out) + H(+)(in). It catalyses the reaction Fe(2+)(in) + H(+)(out) = Fe(2+)(out) + H(+)(in). The catalysed reaction is Mn(2+)(in) + H(+)(out) = Mn(2+)(out) + H(+)(in). Its function is as follows. Macrophage-specific antiporter that fluxes metal ions in either direction against a proton gradient. Localized to late endosomal lysosomal membranes, delivers bivalent cations from the cytosol into these acidic compartments where they may directly affect antimicrobial activity. Involved in iron metabolism and host natural resistance to infection with intracellular parasites. Pathogen resistance involves sequestration of Fe(2+) and Mn(2+), cofactors of both prokaryotic and eukaryotic catalases and superoxide dismutases, not only to protect the macrophage against its own generation of reactive oxygen species, but to deny the cations to the pathogen for synthesis of its protective enzymes. This chain is Natural resistance-associated macrophage protein 1 (SLC11A1), found in Cervus elaphus (Red deer).